Reading from the N-terminus, the 629-residue chain is Iron multicopper oxidase fer1 (629 aa).

The signal sequence occupies residues 1–29; that stretch reads MVAPQRRTVMPALGLLASSLCSLLLTANA. Plastocyanin-like domains are found at residues 44-164 and 175-338; these read VNPD…IHPD and DDYT…TISY. N-linked (GlcNAc...) asparagine glycans are attached at residues N58 and N69. Cu cation is bound by residues H91 and H93. Residue N98 is glycosylated (N-linked (GlcNAc...) asparagine). Residues H144 and H146 each coordinate Cu cation. N-linked (GlcNAc...) asparagine glycans are attached at residues N188, N222, N236, N253, N303, N331, and N398. A Plastocyanin-like 3 domain is found at 401–537; the sequence is YVAPQVPALF…LASIFIEAPD (137 aa). The Cu cation site is built by H452, H455, and H457. N482 carries an N-linked (GlcNAc...) asparagine glycan. Residues H517, C518, H519, and H523 each contribute to the Cu cation site. Residue N569 is glycosylated (N-linked (GlcNAc...) asparagine). The chain crosses the membrane as a helical span at residues 592-612; sequence AIAAFTGCIITGLLGLATVVV.

Belongs to the multicopper oxidase family. Requires Cu cation as cofactor.

The protein localises to the cell membrane. In terms of biological role, iron transport multicopper oxidase, which is required for Fe(2+) high affinity uptake. May be required to oxidize Fe(2+) and release it from the transporter. Essential component of copper-dependent iron transport. The protein is Iron multicopper oxidase fer1 of Mycosarcoma maydis (Corn smut fungus).